The sequence spans 890 residues: DNA mismatch repair protein MutS (890 aa).

645-652 (GPNMAGKS) lines the ATP pocket.

It belongs to the DNA mismatch repair MutS family.

In terms of biological role, this protein is involved in the repair of mismatches in DNA. It is possible that it carries out the mismatch recognition step. This protein has a weak ATPase activity. The chain is DNA mismatch repair protein MutS from Rickettsia conorii (strain ATCC VR-613 / Malish 7).